A 237-amino-acid polypeptide reads, in one-letter code: Fluoroquinolones export permease protein MT2761 (237 aa).

The next 6 membrane-spanning stretches (helical) occupy residues 20-40 (FLHA…PMPV), 49-69 (YVLV…TVFF), 96-116 (VLLA…HGLG), 119-139 (LLPL…VGFS), 147-167 (VTDW…PPVV), and 199-219 (LAPW…AGLC).

As to quaternary structure, the complex is composed of 2 ATP-binding proteins and 2 transmembrane proteins.

It is found in the cell membrane. Functionally, part of the ABC transporter complex involved in fluoroquinolones export. Probably responsible for the translocation of the substrate across the membrane. This chain is Fluoroquinolones export permease protein MT2761, found in Mycobacterium tuberculosis (strain CDC 1551 / Oshkosh).